Here is a 69-residue protein sequence, read N- to C-terminus: Large ribosomal subunit protein bL28 (69 aa).

Belongs to the bacterial ribosomal protein bL28 family.

This is Large ribosomal subunit protein bL28 from Desulfovibrio desulfuricans (strain ATCC 27774 / DSM 6949 / MB).